Consider the following 134-residue polypeptide: Methylglyoxal synthase (134 aa).

Positions 1–134 (MHIALIAHDE…DWRDLRRNDE (134 aa)) constitute an MGS-like domain. Substrate is bound by residues histidine 8, lysine 12, 34–37 (TGTT), and 54–55 (SG). Catalysis depends on aspartate 60, which acts as the Proton donor/acceptor. Histidine 87 lines the substrate pocket.

It belongs to the methylglyoxal synthase family.

It catalyses the reaction dihydroxyacetone phosphate = methylglyoxal + phosphate. Functionally, catalyzes the formation of methylglyoxal from dihydroxyacetone phosphate. In Listeria monocytogenes serotype 4b (strain CLIP80459), this protein is Methylglyoxal synthase.